The following is an 85-amino-acid chain: Large ribosomal subunit protein bL27 (85 aa).

Residues 1–10 (MAQKKGGGST) are compositionally biased toward gly residues. Residues 1 to 21 (MAQKKGGGSTRNGRDSQPKML) form a disordered region.

This sequence belongs to the bacterial ribosomal protein bL27 family.

The polypeptide is Large ribosomal subunit protein bL27 (Polaromonas naphthalenivorans (strain CJ2)).